A 348-amino-acid polypeptide reads, in one-letter code: Major outer membrane protein P.IB (348 aa).

An N-terminal signal peptide occupies residues 1–19; it reads MKKSLIALTLAALPVAAMA.

It belongs to the Gram-negative porin family. In terms of assembly, homotrimer.

It is found in the cell outer membrane. Functionally, serves as a slightly cation selective porin. Major antigen on the gonococcal cell surface and it may have pathogenic properties in addition to its porin activity. This is Major outer membrane protein P.IB (porB) from Neisseria gonorrhoeae.